The following is an 82-amino-acid chain: Small ribosomal subunit protein bS16 (82 aa).

It belongs to the bacterial ribosomal protein bS16 family.

The chain is Small ribosomal subunit protein bS16 from Deinococcus geothermalis (strain DSM 11300 / CIP 105573 / AG-3a).